We begin with the raw amino-acid sequence, 354 residues long: DNA integrity scanning protein DisA (354 aa).

The region spanning 6–144 (EKELKSILKL…GHIKYVLRDS (139 aa)) is the DAC domain. ATP contacts are provided by residues Gly73, Leu91, and 104–108 (TRHRT).

It belongs to the DisA family. Homooctamer. Mg(2+) serves as cofactor.

It carries out the reaction 2 ATP = 3',3'-c-di-AMP + 2 diphosphate. Participates in a DNA-damage check-point that is active prior to asymmetric division when DNA is damaged. DisA forms globular foci that rapidly scan along the chromosomes during sporulation, searching for lesions. When a lesion is present, DisA pauses at the lesion site. This triggers a cellular response that culminates in a temporary block in sporulation initiation. Functionally, also has diadenylate cyclase activity, catalyzing the condensation of 2 ATP molecules into cyclic di-AMP (c-di-AMP). c-di-AMP acts as a signaling molecule that couples DNA integrity with progression of sporulation. The rise in c-di-AMP level generated by DisA while scanning the chromosome, operates as a positive signal that advances sporulation; upon encountering a lesion, the DisA focus arrests at the damaged site and halts c-di-AMP synthesis. The protein is DNA integrity scanning protein DisA of Clostridium kluyveri (strain ATCC 8527 / DSM 555 / NBRC 12016 / NCIMB 10680 / K1).